The sequence spans 240 residues: Ribonuclease PH (240 aa).

Residues Arg-87 and 125–127 (GTR) each bind phosphate.

It belongs to the RNase PH family. As to quaternary structure, homohexameric ring arranged as a trimer of dimers.

The enzyme catalyses tRNA(n+1) + phosphate = tRNA(n) + a ribonucleoside 5'-diphosphate. Its function is as follows. Phosphorolytic 3'-5' exoribonuclease that plays an important role in tRNA 3'-end maturation. Removes nucleotide residues following the 3'-CCA terminus of tRNAs; can also add nucleotides to the ends of RNA molecules by using nucleoside diphosphates as substrates, but this may not be physiologically important. Probably plays a role in initiation of 16S rRNA degradation (leading to ribosome degradation) during starvation. This Stutzerimonas stutzeri (strain A1501) (Pseudomonas stutzeri) protein is Ribonuclease PH.